Here is a 393-residue protein sequence, read N- to C-terminus: MAAATLGQVWARKLLPVPWLLCGSKRCVSSIFKAADLQIQMTKEPQKKPAPSQALLFGKTFTDHMLMVEWNNKAGWGPPRIQPFQNLTLHPACSGLHYSLQLFEGLKAYKGGDQQVRLFRPWLNMDRMLRSARRLCLPDFDKQELLECIRQLIEVDKDWVPDGNGTSLYVRPVLIGNEPSLGVGMVTQALLYVILCPVGSYFPGDSMTPVSLLADPSFVRAWIGGVGDCKLGGNYGPTVAVQREAQKRGCEQVLWLYGPDHQLTEVGTMNIFVYWTHEDGVLELVTPPLNGVILPGVVRQSLLDLARTWGEFRVAERKVTMKELKRALEEGRVREVFGSGTACQVCPVHQILYEGKQLHIPTMENGPELILRFQKELKAIQYGASAHDWMFRV.

The transit peptide at 1–27 directs the protein to the mitochondrion; the sequence is MAAATLGQVWARKLLPVPWLLCGSKRC. Y169 serves as a coordination point for substrate. The residue at position 230 (K230) is an N6-(pyridoxal phosphate)lysine. At K322 the chain carries N6-acetyllysine.

It belongs to the class-IV pyridoxal-phosphate-dependent aminotransferase family. Homodimer. The cofactor is pyridoxal 5'-phosphate.

Its subcellular location is the mitochondrion. It catalyses the reaction L-leucine + 2-oxoglutarate = 4-methyl-2-oxopentanoate + L-glutamate. The enzyme catalyses L-isoleucine + 2-oxoglutarate = (S)-3-methyl-2-oxopentanoate + L-glutamate. The catalysed reaction is L-valine + 2-oxoglutarate = 3-methyl-2-oxobutanoate + L-glutamate. Catalyzes the first reaction in the catabolism of the essential branched chain amino acids leucine, isoleucine, and valine. May also function as a transporter of branched chain alpha-keto acids. This Mus musculus (Mouse) protein is Branched-chain-amino-acid aminotransferase, mitochondrial (Bcat2).